The primary structure comprises 658 residues: Threonine--tRNA ligase (658 aa).

The region spanning Met1–Thr61 is the TGS domain. The segment at Asp259–Pro554 is catalytic. Zn(2+) is bound by residues Cys353, His404, and His531.

This sequence belongs to the class-II aminoacyl-tRNA synthetase family. In terms of assembly, homodimer. Zn(2+) serves as cofactor.

The protein resides in the cytoplasm. It carries out the reaction tRNA(Thr) + L-threonine + ATP = L-threonyl-tRNA(Thr) + AMP + diphosphate + H(+). Its function is as follows. Catalyzes the attachment of threonine to tRNA(Thr) in a two-step reaction: L-threonine is first activated by ATP to form Thr-AMP and then transferred to the acceptor end of tRNA(Thr). Also edits incorrectly charged L-seryl-tRNA(Thr). The chain is Threonine--tRNA ligase from Parafrankia sp. (strain EAN1pec).